Consider the following 227-residue polypeptide: Cytochrome c oxidase subunit 2 (227 aa).

Topologically, residues 1–14 are mitochondrial intermembrane; sequence MAYPFQLGLQDATS. Residues 15-45 traverse the membrane as a helical segment; it reads PIMEELMNFHDHTLMIVFLISSLVLYIISLM. Over 46–59 the chain is Mitochondrial matrix; the sequence is LTTKLTHTSTMDAQ. A helical transmembrane segment spans residues 60 to 87; that stretch reads EVETIWTILPAAILILIALPSLRILYMM. Over 88–227 the chain is Mitochondrial intermembrane; it reads DEINNPVLTV…YFENWSASMI (140 aa). Cu cation-binding residues include histidine 161, cysteine 196, glutamate 198, cysteine 200, histidine 204, and methionine 207. Glutamate 198 is a binding site for Mg(2+). Tyrosine 218 is subject to Phosphotyrosine.

It belongs to the cytochrome c oxidase subunit 2 family. In terms of assembly, component of the cytochrome c oxidase (complex IV, CIV), a multisubunit enzyme composed of 14 subunits. The complex is composed of a catalytic core of 3 subunits MT-CO1, MT-CO2 and MT-CO3, encoded in the mitochondrial DNA, and 11 supernumerary subunits COX4I, COX5A, COX5B, COX6A, COX6B, COX6C, COX7A, COX7B, COX7C, COX8 and NDUFA4, which are encoded in the nuclear genome. The complex exists as a monomer or a dimer and forms supercomplexes (SCs) in the inner mitochondrial membrane with NADH-ubiquinone oxidoreductase (complex I, CI) and ubiquinol-cytochrome c oxidoreductase (cytochrome b-c1 complex, complex III, CIII), resulting in different assemblies (supercomplex SCI(1)III(2)IV(1) and megacomplex MCI(2)III(2)IV(2)). Found in a complex with TMEM177, COA6, COX18, COX20, SCO1 and SCO2. Interacts with TMEM177 in a COX20-dependent manner. Interacts with COX20. Interacts with COX16. Cu cation serves as cofactor.

The protein resides in the mitochondrion inner membrane. It catalyses the reaction 4 Fe(II)-[cytochrome c] + O2 + 8 H(+)(in) = 4 Fe(III)-[cytochrome c] + 2 H2O + 4 H(+)(out). In terms of biological role, component of the cytochrome c oxidase, the last enzyme in the mitochondrial electron transport chain which drives oxidative phosphorylation. The respiratory chain contains 3 multisubunit complexes succinate dehydrogenase (complex II, CII), ubiquinol-cytochrome c oxidoreductase (cytochrome b-c1 complex, complex III, CIII) and cytochrome c oxidase (complex IV, CIV), that cooperate to transfer electrons derived from NADH and succinate to molecular oxygen, creating an electrochemical gradient over the inner membrane that drives transmembrane transport and the ATP synthase. Cytochrome c oxidase is the component of the respiratory chain that catalyzes the reduction of oxygen to water. Electrons originating from reduced cytochrome c in the intermembrane space (IMS) are transferred via the dinuclear copper A center (CU(A)) of subunit 2 and heme A of subunit 1 to the active site in subunit 1, a binuclear center (BNC) formed by heme A3 and copper B (CU(B)). The BNC reduces molecular oxygen to 2 water molecules using 4 electrons from cytochrome c in the IMS and 4 protons from the mitochondrial matrix. In Praomys tullbergi (Tullberg's soft-furred rat), this protein is Cytochrome c oxidase subunit 2 (MT-CO2).